The chain runs to 103 residues: MQNQRIRIRLKAFDHRLIDQSTAEIVETAKRAGAQVRGPIPLPTRKERFTVLISPHVNKDARDQYEIRTHKRLVDIVEPTEKTVDALMRLDLAAGVDVQISLG.

This sequence belongs to the universal ribosomal protein uS10 family. In terms of assembly, part of the 30S ribosomal subunit.

Involved in the binding of tRNA to the ribosomes. This Haemophilus ducreyi (strain 35000HP / ATCC 700724) protein is Small ribosomal subunit protein uS10.